A 430-amino-acid polypeptide reads, in one-letter code: Tol-Pal system protein TolB (430 aa).

The N-terminal stretch at 1-21 is a signal peptide; the sequence is MKQALRVAFGFLMLWAAMLHA.

This sequence belongs to the TolB family. The Tol-Pal system is composed of five core proteins: the inner membrane proteins TolA, TolQ and TolR, the periplasmic protein TolB and the outer membrane protein Pal. They form a network linking the inner and outer membranes and the peptidoglycan layer.

Its subcellular location is the periplasm. Functionally, part of the Tol-Pal system, which plays a role in outer membrane invagination during cell division and is important for maintaining outer membrane integrity. TolB occupies a key intermediary position in the Tol-Pal system because it communicates directly with both membrane-embedded components, Pal in the outer membrane and TolA in the inner membrane. The polypeptide is Tol-Pal system protein TolB (Escherichia fergusonii (strain ATCC 35469 / DSM 13698 / CCUG 18766 / IAM 14443 / JCM 21226 / LMG 7866 / NBRC 102419 / NCTC 12128 / CDC 0568-73)).